The following is a 199-amino-acid chain: Protein GrpE (199 aa).

Positions 1–40 are disordered; that stretch reads MEKKKHGTNSISEALKVKAAVEQETATPEPTPQSETESAD. The segment covering 24–36 has biased composition (polar residues); that stretch reads ETATPEPTPQSET.

Belongs to the GrpE family. Homodimer.

It is found in the cytoplasm. Participates actively in the response to hyperosmotic and heat shock by preventing the aggregation of stress-denatured proteins, in association with DnaK and GrpE. It is the nucleotide exchange factor for DnaK and may function as a thermosensor. Unfolded proteins bind initially to DnaJ; upon interaction with the DnaJ-bound protein, DnaK hydrolyzes its bound ATP, resulting in the formation of a stable complex. GrpE releases ADP from DnaK; ATP binding to DnaK triggers the release of the substrate protein, thus completing the reaction cycle. Several rounds of ATP-dependent interactions between DnaJ, DnaK and GrpE are required for fully efficient folding. In Geotalea uraniireducens (strain Rf4) (Geobacter uraniireducens), this protein is Protein GrpE.